We begin with the raw amino-acid sequence, 341 residues long: HTH-type transcriptional repressor PurR (341 aa).

In terms of domain architecture, HTH lacI-type spans 2 to 56 (ATIKDVAKRANVSTTTVSHVINKTRFVSEETRNAVWAAIKELHYSPSAVARSLKV). The H-T-H motif DNA-binding region spans 4–23 (IKDVAKRANVSTTTVSHVIN). Residues 48–56 (SAVARSLKV) mediate DNA binding. Positions 73, 190, 192, 221, and 275 each coordinate hypoxanthine.

Homodimer.

The protein operates within purine metabolism; purine nucleotide biosynthesis [regulation]. Functionally, is the main repressor of the genes involved in the de novo synthesis of purine nucleotides, regulating purB, purC, purEK, purF, purHD, purL, purMN and guaBA expression. PurR is allosterically activated to bind its cognate DNA by binding the purine corepressors, hypoxanthine or guanine, thereby effecting transcription repression. This Escherichia coli O139:H28 (strain E24377A / ETEC) protein is HTH-type transcriptional repressor PurR.